The following is a 483-amino-acid chain: Jacalin-related lectin 13 (483 aa).

The disordered stretch occupies residues 1–20 (MTQKLESVGSERKSSEYMWD). 3 Jacalin-type lectin domains span residues 2–147 (TQKL…YVTW), 150–295 (PARM…YFTT), and 307–461 (FREK…YFFP).

The protein belongs to the jacalin lectin family.

The polypeptide is Jacalin-related lectin 13 (JAL13) (Arabidopsis thaliana (Mouse-ear cress)).